Reading from the N-terminus, the 568-residue chain is O-fucosyltransferase 9 (568 aa).

Residues 1–19 are compositionally biased toward low complexity; sequence MHGLSRLGNGSSNGRINIP. The segment at 1–33 is disordered; the sequence is MHGLSRLGNGSSNGRINIPSPSPPSSPRIRHTR. Residues 65–85 form a helical; Signal-anchor for type II membrane protein membrane-spanning segment; the sequence is LLLAPLLYIAGMLLFMGSFGF. Asn-125, Asn-151, Asn-189, and Asn-243 each carry an N-linked (GlcNAc...) asparagine glycan. 336 to 338 serves as a coordination point for substrate; that stretch reads HLR. N-linked (GlcNAc...) asparagine glycans are attached at residues Asn-408 and Asn-409.

The protein belongs to the glycosyltransferase GT106 family.

Its subcellular location is the membrane. It functions in the pathway glycan metabolism. This Arabidopsis thaliana (Mouse-ear cress) protein is O-fucosyltransferase 9.